Here is a 335-residue protein sequence, read N- to C-terminus: Methyltransferase pgmE (335 aa).

The protein belongs to the methyltransferase superfamily.

It participates in pigment biosynthesis. It functions in the pathway secondary metabolite biosynthesis. In terms of biological role, methyltransferase; part of the gene cluster that mediates the biosynthesis of pleosporalin A, ascomycone A, as well as a third cryptic naphthoquinone derived pigment, all responsible for the coloration of conidia. Essential for the production of pleosporalin A, but not the 2 other final products. The pathway begins with the biosynthesis of the cyclized heptaketide 3-acetonyl-1,6,8-trihydroxy-2-naphthaldehyde by the NR-PKS pgmA. The C-6 hydroxyl group is further methylated by the O-methyltransferase pgmB to yield fusarubinaldehyde which is in turn oxidized by the cytochrome P450 monooxygenase pgmC at C-9. The C-1 hydroxyl group is then methylated spontaneously. Although pgmE, pgmD and pgmH are essential for the production of pleosporalin A, it is not the case for the 2 other final products and it remains difficult to assign a specific function to each enzyme. PgmF and pgmG seem not to be involved in pigment biosynthesis although they were regulated by the cluster-specific transcription factor pgmR. The polypeptide is Methyltransferase pgmE (Aspergillus terreus (strain NIH 2624 / FGSC A1156)).